We begin with the raw amino-acid sequence, 426 residues long: uncharacterized protein (426 aa).

Residues glutamate 23–threonine 42 form a disordered region. Positions arginine 26–threonine 42 are enriched in polar residues.

This sequence belongs to the serpin family.

This is an uncharacterized protein from Thermococcus kodakarensis (strain ATCC BAA-918 / JCM 12380 / KOD1) (Pyrococcus kodakaraensis (strain KOD1)).